A 268-amino-acid polypeptide reads, in one-letter code: Zinc finger protein SNAI2 (268 aa).

The interval 1–20 is SNAG domain; sequence MPRSFLVKKHFNASKKPNYS. Residues 84-116 form a disordered region; the sequence is GRVSPLPSSDTSSKDHSGSESPISDEEERLQPK. C2H2-type zinc fingers lie at residues 128 to 150, 159 to 181, 185 to 207, and 213 to 235; these read FQCNLCNKTYSTFSGLAKHKQLH, FSCKYCDKEYVSLGALKMHIRTH, CVCKICGKAFSRPWLLQGHIRTH, and FSCPHCNRAFADRSNLRAHLQTH. Residues 241–264 form a C2H2-type 5; atypical zinc finger; it reads YQCKNCSKTFSRMSLLHKHEESGC.

The protein belongs to the snail C2H2-type zinc-finger protein family. Interacts (via SNAG domain) with LIMD1 (via LIM domains), WTIP (via LIM domains) and AJUBA (via LIM domains). Interacts (via zinc fingers) with KPNA2, KPNB1 and TNPO1. May interact (via zinc fingers) with IPO7. In terms of processing, phosphorylated by GSK3B. Once phosphorylated, it becomes a target for ubiquitination. Post-translationally, ubiquitinated by the SCF(FBXO11) complex; ubiquitination requires previous GSK3B-mediated SNAI2 phosphorylation.

It localises to the nucleus. The protein localises to the cytoplasm. Transcriptional repressor that modulates both activator-dependent and basal transcription. Involved in the generation and migration of neural crest cells. Plays a role in mediating RAF1-induced transcriptional repression of the TJ protein, occludin (OCLN) and subsequent oncogenic transformation of epithelial cells. Represses BRCA2 expression by binding to its E2-box-containing silencer and recruiting CTBP1 and HDAC1 in breast cells. In epidermal keratinocytes, binds to the E-box in ITGA3 promoter and represses its transcription. Involved in the regulation of ITGB1 and ITGB4 expression and cell adhesion and proliferation in epidermal keratinocytes. Binds to E-box2 domain of BSG and activates its expression during TGFB1-induced epithelial-mesenchymal transition (EMT) in hepatocytes. Represses E-Cadherin/CDH1 transcription via E-box elements. Involved in osteoblast maturation. Binds to RUNX2 and SOC9 promoters and may act as a positive and negative transcription regulator, respectively, in osteoblasts. Binds to CXCL12 promoter via E-box regions in mesenchymal stem cells and osteoblasts. Plays an essential role in TWIST1-induced EMT and its ability to promote invasion and metastasis. The polypeptide is Zinc finger protein SNAI2 (Snai2) (Rattus norvegicus (Rat)).